We begin with the raw amino-acid sequence, 37 residues long: Chorion class CB protein PCH12 (37 aa).

A central domain region spans residues 1 to 26; the sequence is DGIFPTVGAGDVWYGCGDGAVGIVAE. The right arm stretch occupies residues 27-37; the sequence is TPFASTTTNPA.

Belongs to the chorion protein family.

Functionally, this protein is one of many from the eggshell of the silk moth. This chain is Chorion class CB protein PCH12, found in Antheraea polyphemus (Polyphemus moth).